We begin with the raw amino-acid sequence, 237 residues long: Small ribosomal subunit protein uS3 (237 aa).

The KH type-2 domain maps to 39–107; sequence VRQFLTKELK…PAQINISEVR (69 aa).

It belongs to the universal ribosomal protein uS3 family. In terms of assembly, part of the 30S ribosomal subunit. Forms a tight complex with proteins S10 and S14.

Functionally, binds the lower part of the 30S subunit head. Binds mRNA in the 70S ribosome, positioning it for translation. In Aeromonas hydrophila subsp. hydrophila (strain ATCC 7966 / DSM 30187 / BCRC 13018 / CCUG 14551 / JCM 1027 / KCTC 2358 / NCIMB 9240 / NCTC 8049), this protein is Small ribosomal subunit protein uS3.